We begin with the raw amino-acid sequence, 253 residues long: Zinc import ATP-binding protein ZnuC (253 aa).

One can recognise an ABC transporter domain in the interval 6–227 (VTLNKISVTF…FGNRGAEQLA (222 aa)). 38–45 (GPNGAGKS) lines the ATP pocket.

This sequence belongs to the ABC transporter superfamily. Zinc importer (TC 3.A.1.15.5) family. The complex is composed of two ATP-binding proteins (ZnuC), two transmembrane proteins (ZnuB) and a solute-binding protein (ZnuA).

It localises to the cell inner membrane. The catalysed reaction is Zn(2+)(out) + ATP(in) + H2O(in) = Zn(2+)(in) + ADP(in) + phosphate(in) + H(+)(in). Functionally, part of the ABC transporter complex ZnuABC involved in zinc import. Responsible for energy coupling to the transport system. This is Zinc import ATP-binding protein ZnuC from Yersinia pseudotuberculosis serotype I (strain IP32953).